We begin with the raw amino-acid sequence, 103 residues long: NADH-quinone oxidoreductase subunit K 2 (103 aa).

3 consecutive transmembrane segments (helical) span residues 7-27 (LAWY…GFMI), 31-51 (IITI…TFVA), and 63-83 (IFVF…LGII).

The protein belongs to the complex I subunit 4L family. In terms of assembly, NDH-1 is composed of 14 different subunits. Subunits NuoA, H, J, K, L, M, N constitute the membrane sector of the complex.

It is found in the cell inner membrane. The enzyme catalyses a quinone + NADH + 5 H(+)(in) = a quinol + NAD(+) + 4 H(+)(out). In terms of biological role, NDH-1 shuttles electrons from NADH, via FMN and iron-sulfur (Fe-S) centers, to quinones in the respiratory chain. The immediate electron acceptor for the enzyme in this species is believed to be ubiquinone. Couples the redox reaction to proton translocation (for every two electrons transferred, four hydrogen ions are translocated across the cytoplasmic membrane), and thus conserves the redox energy in a proton gradient. In Koribacter versatilis (strain Ellin345), this protein is NADH-quinone oxidoreductase subunit K 2.